The following is a 416-amino-acid chain: Choline/ethanolaminephosphotransferase 1 (416 aa).

A disordered region spans residues 1–20 (MSGHRSTRKRCGDSHPESPV). Ser18 bears the Phosphoserine mark. Thr40 bears the Phosphothreonine mark. Asn86 lines the CDP-choline pocket. Transmembrane regions (helical) follow at residues 89 to 108 (TIIG…FYCP) and 116 to 133 (LWAY…QSLD). Residue Asp133 participates in Mg(2+) binding. N-linked (GlcNAc...) asparagine glycosylation occurs at Asn144. CDP-choline is bound at residue Glu151. Mg(2+) is bound at residue Asp154. The active-site Proton acceptor is His155. A run of 8 helical transmembrane segments spans residues 156-176 (GCDS…VQLG), 180-199 (DWMF…AHWQ), 210-230 (IIDV…AVIG), 246-267 (MKLL…NYFR), 286-306 (VLSP…IYKK), 315-334 (HPCL…TNKL), 349-363 (TAFI…DQYF), and 368-388 (DEYI…IRYC). Asp158 contributes to the Mg(2+) binding site.

Belongs to the CDP-alcohol phosphatidyltransferase class-I family. In terms of assembly, homodimer. It depends on Mg(2+) as a cofactor. Mn(2+) serves as cofactor.

The protein localises to the endoplasmic reticulum membrane. It localises to the nucleus membrane. It catalyses the reaction CDP-ethanolamine + a 1,2-diacyl-sn-glycerol = a 1,2-diacyl-sn-glycero-3-phosphoethanolamine + CMP + H(+). It carries out the reaction CDP-choline + a 1,2-diacyl-sn-glycerol = a 1,2-diacyl-sn-glycero-3-phosphocholine + CMP + H(+). The enzyme catalyses 1-O-alkyl-2-acyl-sn-glycerol + CDP-choline = a 1-O-alkyl-2-acyl-sn-glycero-3-phosphocholine + CMP + H(+). The catalysed reaction is a 1-O-(1Z-alkenyl)-2-acyl-sn-glycerol + CDP-choline = a 1-O-(1Z-alkenyl)-2-acyl-sn-glycero-3-phosphocholine + CMP + H(+). It catalyses the reaction 1,2-dioctanoyl-sn-glycerol + CDP-choline = 1,2-dioctanoyl-sn-glycero-3-phosphocholine + CMP + H(+). It carries out the reaction 1,2-didecanoyl-sn-glycerol + CDP-choline = 1,2-didecanoyl-sn-glycero-3-phosphocholine + CMP + H(+). The enzyme catalyses CDP-choline + 1,2-di-(9Z-octadecenoyl)-sn-glycerol = 1,2-di-(9Z-octadecenoyl)-sn-glycero-3-phosphocholine + CMP + H(+). The catalysed reaction is 1-hexadecanoyl-2-(9Z-octadecenoyl)-sn-glycerol + CDP-choline = 1-hexadecanoyl-2-(9Z-octadecenoyl)-sn-glycero-3-phosphocholine + CMP + H(+). It catalyses the reaction CDP-ethanolamine + 1,2-di-(9Z-octadecenoyl)-sn-glycerol = 1,2-di-(9Z-octadecenoyl)-sn-glycero-3-phosphoethanolamine + CMP + H(+). It carries out the reaction 1-hexadecanoyl-2-(9Z-octadecenoyl)-sn-glycerol + CDP-ethanolamine = 1-hexadecanoyl-2-(9Z-octadecenoyl)-sn-glycero-3-phosphoethanolamine + CMP + H(+). The enzyme catalyses 1-hexadecanoyl-2-(4Z,7Z,10Z,13Z,16Z,19Z-docosahexaenoyl)-sn-glycerol + CDP-choline = 1-hexadecanoyl-2-(4Z,7Z,10Z,13Z,16Z,19Z-docosahexaenoyl)-sn-glycero-3-phosphocholine + CMP + H(+). The catalysed reaction is 1,2-di-(9Z-hexadecenoyl)-sn-glycerol + CDP-choline = 1,2-di-(9Z-hexadecenoyl)-sn-glycero-3-phosphocholine + CMP + H(+). It catalyses the reaction 1,2-di-(9Z-hexadecenoyl)-sn-glycerol + CDP-ethanolamine = 1,2-di-(9Z-hexadecenoyl)-sn-glycero-3-phosphoethanolamine + CMP + H(+). It carries out the reaction 1-O-hexadecyl-2-acetyl-sn-glycerol + CDP-choline = 1-O-hexadecyl-2-acetyl-sn-glycero-3-phosphocholine + CMP + H(+). The enzyme catalyses 1-O-hexadecyl-2-(5Z,8Z,11Z,14Z-eicosatetraenoyl)-sn-glycerol + CDP-choline = 1-O-hexadecyl-2-(5Z,8Z,11Z,14Z)-eicosatetraenoyl-sn-glycero-3-phosphocholine + CMP + H(+). Its pathway is phospholipid metabolism; phosphatidylethanolamine biosynthesis; phosphatidylethanolamine from ethanolamine: step 3/3. It participates in phospholipid metabolism; phosphatidylcholine biosynthesis; phosphatidylcholine from phosphocholine: step 2/2. Catalyzes both phosphatidylcholine and phosphatidylethanolamine biosynthesis from CDP-choline and CDP-ethanolamine, respectively. Involved in protein-dependent process of phospholipid transport to distribute phosphatidyl choline to the lumenal surface. Has a higher cholinephosphotransferase activity than ethanolaminephosphotransferase activity. This Mus musculus (Mouse) protein is Choline/ethanolaminephosphotransferase 1.